Reading from the N-terminus, the 319-residue chain is MQNKDACKSLSSWVSLSISLLVLTVPLIWPYNSTAFPIYAQQNYESPREATGRIVCANCHLAKKAVDIEVPQAVLPDTVFEAVVKIPYDTQIKQVLSNGKKGGLNVGAVLILPEGFELAPSDRIPPELKEKISNIYFQPYSPEKKNILVVGPLPGNKYSELVFPILSPDPATNKKASFLKYPIYLGGNRGRGQVYPDGSKSNNNVFSASTAGTISQITRQKKGGYEVIIKTTDGREVTDIIPPGPELIVSEGESIKADQLLTNNPNVGGFGQADAEIVLQDPLRIQGLLVFFASVILAQIFLVLKKKQFEKVQLAEMNF.

Positions 1 to 35 (MQNKDACKSLSSWVSLSISLLVLTVPLIWPYNSTA) are cleaved as a signal peptide. 4 residues coordinate heme: Phe36, Cys56, Cys59, and His60. A helical membrane pass occupies residues 285 to 305 (IQGLLVFFASVILAQIFLVLK).

The protein belongs to the cytochrome f family. In terms of assembly, the 4 large subunits of the cytochrome b6-f complex are cytochrome b6, subunit IV (17 kDa polypeptide, petD), cytochrome f and the Rieske protein, while the 4 small subunits are PetG, PetL, PetM and PetN. The complex functions as a dimer. The cofactor is heme.

It is found in the plastid. It localises to the chloroplast thylakoid membrane. Component of the cytochrome b6-f complex, which mediates electron transfer between photosystem II (PSII) and photosystem I (PSI), cyclic electron flow around PSI, and state transitions. The sequence is that of Cytochrome f from Staurastrum punctulatum (Green alga).